Here is a 224-residue protein sequence, read N- to C-terminus: Response regulator protein GraR (224 aa).

Residues 2–115 form the Response regulatory domain; that stretch reads QILLVEDDNT…VLIAKLQAIY (114 aa). The residue at position 51 (D51) is a 4-aspartylphosphate. The segment at residues 126-224 is a DNA-binding region (ompR/PhoB-type); that stretch reads KRTLTWQDAV…KVGKGYMAHE (99 aa). A phosphothreonine mark is found at T128, T130, and T149.

As to quaternary structure, interacts with GraX. Post-translationally, phosphorylated by GraS. Phosphorylated by Stk1; phosphorylation increases the DNA-binding activity of GraR.

It is found in the cytoplasm. Functionally, member of the two-component regulatory system GraR/GraS involved in resistance against cationic antimicrobial peptides (CAMPs). Upon phosphorylation by GraS, functions as a transcription regulator by direct binding to promoter regions of target genes such as adhesins, exoproteins, transporters, toxins, and proteins involved in cell wall synthesis. Down-regulates the expression of many genes involved in RNA and amino acid synthesis or glycolysis. This Staphylococcus aureus (strain Mu50 / ATCC 700699) protein is Response regulator protein GraR (graR).